The chain runs to 435 residues: U-box domain-containing protein 36 (435 aa).

Residues 227–345 (EAEASKRKAR…LKGKREEEEA (119 aa)) adopt a coiled-coil conformation. A U-box domain is found at 352-426 (EPPQYFICPI…QEWLQLRELL (75 aa)).

The catalysed reaction is S-ubiquitinyl-[E2 ubiquitin-conjugating enzyme]-L-cysteine + [acceptor protein]-L-lysine = [E2 ubiquitin-conjugating enzyme]-L-cysteine + N(6)-ubiquitinyl-[acceptor protein]-L-lysine.. Its pathway is protein modification; protein ubiquitination. Functionally, functions as an E3 ubiquitin ligase. The protein is U-box domain-containing protein 36 (PUB36) of Arabidopsis thaliana (Mouse-ear cress).